The sequence spans 96 residues: Aspartyl/glutamyl-tRNA(Asn/Gln) amidotransferase subunit C (96 aa).

This sequence belongs to the GatC family. As to quaternary structure, heterotrimer of A, B and C subunits.

The catalysed reaction is L-glutamyl-tRNA(Gln) + L-glutamine + ATP + H2O = L-glutaminyl-tRNA(Gln) + L-glutamate + ADP + phosphate + H(+). It carries out the reaction L-aspartyl-tRNA(Asn) + L-glutamine + ATP + H2O = L-asparaginyl-tRNA(Asn) + L-glutamate + ADP + phosphate + 2 H(+). In terms of biological role, allows the formation of correctly charged Asn-tRNA(Asn) or Gln-tRNA(Gln) through the transamidation of misacylated Asp-tRNA(Asn) or Glu-tRNA(Gln) in organisms which lack either or both of asparaginyl-tRNA or glutaminyl-tRNA synthetases. The reaction takes place in the presence of glutamine and ATP through an activated phospho-Asp-tRNA(Asn) or phospho-Glu-tRNA(Gln). In Trichormus variabilis (strain ATCC 29413 / PCC 7937) (Anabaena variabilis), this protein is Aspartyl/glutamyl-tRNA(Asn/Gln) amidotransferase subunit C.